The following is a 204-amino-acid chain: Protein GrpE (204 aa).

The tract at residues 1–55 is disordered; that stretch reads MSSKNNPESETKAKNKWEKVMEAEEEQEEGRGDGSQEMEPHREGLEFPSREKLEG. Basic and acidic residues-rich tracts occupy residues 7-22 and 29-55; these read PESE…KVME and EGRG…KLEG.

Belongs to the GrpE family. Homodimer.

The protein localises to the cytoplasm. Participates actively in the response to hyperosmotic and heat shock by preventing the aggregation of stress-denatured proteins, in association with DnaK and GrpE. It is the nucleotide exchange factor for DnaK and may function as a thermosensor. Unfolded proteins bind initially to DnaJ; upon interaction with the DnaJ-bound protein, DnaK hydrolyzes its bound ATP, resulting in the formation of a stable complex. GrpE releases ADP from DnaK; ATP binding to DnaK triggers the release of the substrate protein, thus completing the reaction cycle. Several rounds of ATP-dependent interactions between DnaJ, DnaK and GrpE are required for fully efficient folding. This Coxiella burnetii (strain RSA 331 / Henzerling II) protein is Protein GrpE.